We begin with the raw amino-acid sequence, 104 residues long: Translation initiation factor 1A (104 aa).

The span at 1–14 shows a compositional bias: low complexity; sequence MRGQQTPPQQPTRV. The disordered stretch occupies residues 1–20; that stretch reads MRGQQTPPQQPTRVRTPREN. In terms of domain architecture, S1-like spans 12–87; sequence TRVRTPRENE…EKCDVIWRYT (76 aa).

This sequence belongs to the eIF-1A family.

In terms of biological role, seems to be required for maximal rate of protein biosynthesis. Enhances ribosome dissociation into subunits and stabilizes the binding of the initiator Met-tRNA(I) to 40 S ribosomal subunits. In Methanococcus maripaludis (strain DSM 14266 / JCM 13030 / NBRC 101832 / S2 / LL), this protein is Translation initiation factor 1A.